Reading from the N-terminus, the 194-residue chain is Large ribosomal subunit protein uL5 (194 aa).

The protein belongs to the universal ribosomal protein uL5 family. In terms of assembly, part of the 50S ribosomal subunit; part of the 5S rRNA/L5/L18/L25 subcomplex. Contacts the 5S rRNA and the P site tRNA. Forms a bridge to the 30S subunit in the 70S ribosome.

Its function is as follows. This is one of the proteins that bind and probably mediate the attachment of the 5S RNA into the large ribosomal subunit, where it forms part of the central protuberance. In the 70S ribosome it contacts protein S13 of the 30S subunit (bridge B1b), connecting the 2 subunits; this bridge is implicated in subunit movement. Contacts the P site tRNA; the 5S rRNA and some of its associated proteins might help stabilize positioning of ribosome-bound tRNAs. The chain is Large ribosomal subunit protein uL5 from Chlorobium luteolum (strain DSM 273 / BCRC 81028 / 2530) (Pelodictyon luteolum).